The primary structure comprises 363 residues: MILKGKKLLFMAGGTGGHVYPALAVARAAAEQGSIIHWLGNQSGFEGKKVPEAGFIFHDIAVYGLRGNGVIGWLKAPFMIGRAVFQAKKIMQHIQPDVVIGMGGFASGPGGIAAKILNIPLLIHEQNAVMGLTNALLSRVANTILLASQQAAAKIALKYPYRVTGNPVREDITLLPAPEERFHYRSGRIRLLVLGGSQGAKAINLLLPQALSLLPEEQRPQVLHQTGARWLEKTQTEYAALNVHAEIVPFIDDMAKAYANADWVIARSGALTVSEIATAGLAALFIPFPYAVDDHQTMNAQCLAEVGAAAILEEKTLTADILATAIQSRQDRSALLTQAERARLCSDEKALGEILRAIKELCR.

UDP-N-acetyl-alpha-D-glucosamine-binding positions include 15 to 17 (TGG), asparagine 127, arginine 169, serine 197, isoleucine 251, 270 to 275 (ALTVSE), and glutamine 296.

The protein belongs to the glycosyltransferase 28 family. MurG subfamily.

Its subcellular location is the cell inner membrane. The enzyme catalyses di-trans,octa-cis-undecaprenyl diphospho-N-acetyl-alpha-D-muramoyl-L-alanyl-D-glutamyl-meso-2,6-diaminopimeloyl-D-alanyl-D-alanine + UDP-N-acetyl-alpha-D-glucosamine = di-trans,octa-cis-undecaprenyl diphospho-[N-acetyl-alpha-D-glucosaminyl-(1-&gt;4)]-N-acetyl-alpha-D-muramoyl-L-alanyl-D-glutamyl-meso-2,6-diaminopimeloyl-D-alanyl-D-alanine + UDP + H(+). It functions in the pathway cell wall biogenesis; peptidoglycan biosynthesis. In terms of biological role, cell wall formation. Catalyzes the transfer of a GlcNAc subunit on undecaprenyl-pyrophosphoryl-MurNAc-pentapeptide (lipid intermediate I) to form undecaprenyl-pyrophosphoryl-MurNAc-(pentapeptide)GlcNAc (lipid intermediate II). The polypeptide is UDP-N-acetylglucosamine--N-acetylmuramyl-(pentapeptide) pyrophosphoryl-undecaprenol N-acetylglucosamine transferase (Dichelobacter nodosus (strain VCS1703A)).